We begin with the raw amino-acid sequence, 81 residues long: Costars family protein ABRACL (81 aa).

Belongs to the costars family.

In Xenopus laevis (African clawed frog), this protein is Costars family protein ABRACL (abracl).